Consider the following 384-residue polypeptide: N-acetylneuraminate epimerase (384 aa).

An N-terminal signal peptide occupies residues 1–24 (MMKTKYLLLPLLASSSLLSHMAFA). Kelch repeat units follow at residues 46–90 (KVYV…TVVG), 92–145 (NIFV…YSPD), 147–184 (KQVL…KIVD), 185–230 (DYMG…VIDG), 233–281 (ITLI…IAGA), 303–352 (AQFE…SVKG), and 354–383 (VLMV…IDIV). The Proton acceptor role is filled by glutamate 239.

Belongs to the NanM family. In terms of assembly, homodimer.

Its subcellular location is the periplasm. It carries out the reaction N-acetyl-alpha-neuraminate = N-acetyl-beta-neuraminate. Its function is as follows. Converts alpha-N-acetylneuranimic acid (Neu5Ac) to the beta-anomer, accelerating the equilibrium between the alpha- and beta-anomers. Probably facilitates sialidase-negative bacteria to compete successfully for limited amounts of extracellular Neu5Ac, which is likely taken up in the beta-anomer. In addition, the rapid removal of sialic acid from solution might be advantageous to the bacterium to damp down host responses. In Vibrio vulnificus (strain YJ016), this protein is N-acetylneuraminate epimerase.